The primary structure comprises 549 residues: CTP synthase (549 aa).

The interval 1–270 (MTKFVFVTGG…DRLICEELRL (270 aa)) is amidoligase domain. Residue Ser-13 coordinates CTP. Ser-13 is a binding site for UTP. Residues 14–19 (SLGKGI) and Asp-71 each bind ATP. Residues Asp-71 and Glu-144 each coordinate Mg(2+). Residues 151–153 (DIE), 191–196 (KTKPTQ), and Lys-227 each bind CTP. UTP-binding positions include 191–196 (KTKPTQ) and Lys-227. One can recognise a Glutamine amidotransferase type-1 domain in the interval 295–547 (TIGMVGKYVD…VEAALAAQRQ (253 aa)). Gly-356 is a binding site for L-glutamine. The active-site Nucleophile; for glutamine hydrolysis is Cys-383. L-glutamine contacts are provided by residues 384-387 (LGMQ), Glu-407, and Arg-473. Catalysis depends on residues His-520 and Glu-522.

It belongs to the CTP synthase family. In terms of assembly, homotetramer.

It carries out the reaction UTP + L-glutamine + ATP + H2O = CTP + L-glutamate + ADP + phosphate + 2 H(+). The enzyme catalyses L-glutamine + H2O = L-glutamate + NH4(+). The catalysed reaction is UTP + NH4(+) + ATP = CTP + ADP + phosphate + 2 H(+). The protein operates within pyrimidine metabolism; CTP biosynthesis via de novo pathway; CTP from UDP: step 2/2. Allosterically activated by GTP, when glutamine is the substrate; GTP has no effect on the reaction when ammonia is the substrate. The allosteric effector GTP functions by stabilizing the protein conformation that binds the tetrahedral intermediate(s) formed during glutamine hydrolysis. Inhibited by the product CTP, via allosteric rather than competitive inhibition. Its function is as follows. Catalyzes the ATP-dependent amination of UTP to CTP with either L-glutamine or ammonia as the source of nitrogen. Regulates intracellular CTP levels through interactions with the four ribonucleotide triphosphates. The protein is CTP synthase of Cupriavidus metallidurans (strain ATCC 43123 / DSM 2839 / NBRC 102507 / CH34) (Ralstonia metallidurans).